The sequence spans 367 residues: Peptide chain release factor 2 (367 aa).

Position 249 is an N5-methylglutamine (Gln249).

It belongs to the prokaryotic/mitochondrial release factor family. Methylated by PrmC. Methylation increases the termination efficiency of RF2.

It is found in the cytoplasm. Functionally, peptide chain release factor 2 directs the termination of translation in response to the peptide chain termination codons UGA and UAA. This Pseudothermotoga lettingae (strain ATCC BAA-301 / DSM 14385 / NBRC 107922 / TMO) (Thermotoga lettingae) protein is Peptide chain release factor 2.